The sequence spans 157 residues: 2-C-methyl-D-erythritol 2,4-cyclodiphosphate synthase (157 aa).

Residues aspartate 8 and histidine 10 each contribute to the a divalent metal cation site. 4-CDP-2-C-methyl-D-erythritol 2-phosphate is bound by residues 8–10 (DVH) and 34–35 (HS). An a divalent metal cation-binding site is contributed by histidine 42. 4-CDP-2-C-methyl-D-erythritol 2-phosphate-binding positions include 56–58 (DIG), 61–65 (FPDTD), 100–106 (AQAPKMA), 132–135 (TTTE), phenylalanine 139, and arginine 142.

It belongs to the IspF family. Homotrimer. The cofactor is a divalent metal cation.

It carries out the reaction 4-CDP-2-C-methyl-D-erythritol 2-phosphate = 2-C-methyl-D-erythritol 2,4-cyclic diphosphate + CMP. Its pathway is isoprenoid biosynthesis; isopentenyl diphosphate biosynthesis via DXP pathway; isopentenyl diphosphate from 1-deoxy-D-xylulose 5-phosphate: step 4/6. Functionally, involved in the biosynthesis of isopentenyl diphosphate (IPP) and dimethylallyl diphosphate (DMAPP), two major building blocks of isoprenoid compounds. Catalyzes the conversion of 4-diphosphocytidyl-2-C-methyl-D-erythritol 2-phosphate (CDP-ME2P) to 2-C-methyl-D-erythritol 2,4-cyclodiphosphate (ME-CPP) with a corresponding release of cytidine 5-monophosphate (CMP). The sequence is that of 2-C-methyl-D-erythritol 2,4-cyclodiphosphate synthase from Pseudomonas putida (strain ATCC 700007 / DSM 6899 / JCM 31910 / BCRC 17059 / LMG 24140 / F1).